Here is a 163-residue protein sequence, read N- to C-terminus: Large ribosomal subunit protein uL18 (163 aa).

This sequence belongs to the universal ribosomal protein uL18 family. In terms of assembly, part of the 50S ribosomal subunit. Contacts the 5S and 23S rRNAs.

In terms of biological role, this is one of the proteins that bind and probably mediate the attachment of the 5S RNA into the large ribosomal subunit, where it forms part of the central protuberance. The chain is Large ribosomal subunit protein uL18 from Thermoplasma acidophilum (strain ATCC 25905 / DSM 1728 / JCM 9062 / NBRC 15155 / AMRC-C165).